The primary structure comprises 327 residues: Putative gluconeogenesis factor (327 aa).

This sequence belongs to the gluconeogenesis factor family.

It is found in the cytoplasm. Functionally, required for morphogenesis under gluconeogenic growth conditions. In Lactococcus lactis subsp. lactis (strain IL1403) (Streptococcus lactis), this protein is Putative gluconeogenesis factor (yjiF).